The following is a 183-amino-acid chain: tRNA-splicing endonuclease (183 aa).

Residues Tyr120, His128, and Lys159 contribute to the active site.

This sequence belongs to the tRNA-intron endonuclease family. Archaeal short subfamily. Homotetramer; although the tetramer contains four active sites, only two participate in the cleavage. Therefore, it should be considered as a dimer of dimers.

It carries out the reaction pretRNA = a 3'-half-tRNA molecule with a 5'-OH end + a 5'-half-tRNA molecule with a 2',3'-cyclic phosphate end + an intron with a 2',3'-cyclic phosphate and a 5'-hydroxyl terminus.. Its function is as follows. Endonuclease that removes tRNA introns. Cleaves pre-tRNA at the 5'- and 3'-splice sites to release the intron. The products are an intron and two tRNA half-molecules bearing 2',3' cyclic phosphate and 5'-OH termini. Recognizes a pseudosymmetric substrate in which 2 bulged loops of 3 bases are separated by a stem of 4 bp. This is tRNA-splicing endonuclease from Pyrobaculum aerophilum (strain ATCC 51768 / DSM 7523 / JCM 9630 / CIP 104966 / NBRC 100827 / IM2).